The sequence spans 317 residues: Acetyl-coenzyme A carboxylase carboxyl transferase subunit alpha (317 aa).

Residues 33 to 294 (NLDDEITRLQ…KKRLLADLAD (262 aa)) form the CoA carboxyltransferase C-terminal domain.

This sequence belongs to the AccA family. In terms of assembly, acetyl-CoA carboxylase is a heterohexamer composed of biotin carboxyl carrier protein (AccB), biotin carboxylase (AccC) and two subunits each of ACCase subunit alpha (AccA) and ACCase subunit beta (AccD).

It is found in the cytoplasm. The enzyme catalyses N(6)-carboxybiotinyl-L-lysyl-[protein] + acetyl-CoA = N(6)-biotinyl-L-lysyl-[protein] + malonyl-CoA. It participates in lipid metabolism; malonyl-CoA biosynthesis; malonyl-CoA from acetyl-CoA: step 1/1. Component of the acetyl coenzyme A carboxylase (ACC) complex. First, biotin carboxylase catalyzes the carboxylation of biotin on its carrier protein (BCCP) and then the CO(2) group is transferred by the carboxyltransferase to acetyl-CoA to form malonyl-CoA. In Histophilus somni (strain 129Pt) (Haemophilus somnus), this protein is Acetyl-coenzyme A carboxylase carboxyl transferase subunit alpha.